Consider the following 727-residue polypeptide: Putative inactive disease susceptibility protein LOV1 (727 aa).

The NB-ARC domain maps to 44 to 336 (EQSVEALAGH…AAEGIITSSD (293 aa)). 5 LRR repeats span residues 459–484 (LPLLRVLDLSRVKFEGGKLPSSIGDL), 485–507 (IHLRFLSLHRAWISHLPSSLRNL), 509–530 (LLLYLNLGFNGMVHVPNVLKEM), 575–600 (MTKLRELSLFITDGSSDTLSSSLGQL), and 601–626 (RSLEVLHLYDRQEPRVAYHGGEIVLN).

This sequence belongs to the disease resistance NB-LRR family. RPP8/HRT subfamily.

The protein is Putative inactive disease susceptibility protein LOV1 (LOV1) of Arabidopsis thaliana (Mouse-ear cress).